We begin with the raw amino-acid sequence, 636 residues long: Threonine--tRNA ligase (636 aa).

A TGS domain is found at 1 to 61 (MINITLPDGK…ETDASVVFIT (61 aa)). Residues 238–528 (DHRKLGTALD…LIEHYAGKFP (291 aa)) are catalytic. The Zn(2+) site is built by cysteine 329, histidine 380, and histidine 505.

It belongs to the class-II aminoacyl-tRNA synthetase family. Homodimer. Requires Zn(2+) as cofactor.

It localises to the cytoplasm. The catalysed reaction is tRNA(Thr) + L-threonine + ATP = L-threonyl-tRNA(Thr) + AMP + diphosphate + H(+). Functionally, catalyzes the attachment of threonine to tRNA(Thr) in a two-step reaction: L-threonine is first activated by ATP to form Thr-AMP and then transferred to the acceptor end of tRNA(Thr). Also edits incorrectly charged L-seryl-tRNA(Thr). This Desulfatibacillum aliphaticivorans protein is Threonine--tRNA ligase.